Reading from the N-terminus, the 310-residue chain is Elongation factor Ts (310 aa).

The involved in Mg(2+) ion dislocation from EF-Tu stretch occupies residues 80 to 83 (TDFV).

This sequence belongs to the EF-Ts family.

It localises to the cytoplasm. Functionally, associates with the EF-Tu.GDP complex and induces the exchange of GDP to GTP. It remains bound to the aminoacyl-tRNA.EF-Tu.GTP complex up to the GTP hydrolysis stage on the ribosome. In Beijerinckia indica subsp. indica (strain ATCC 9039 / DSM 1715 / NCIMB 8712), this protein is Elongation factor Ts.